The following is a 363-amino-acid chain: 3-methyl-D-ornithine--L-lysine ligase (363 aa).

Lys-10 lines the ATP pocket. An L-lysine-binding site is contributed by 11–12 (LQ). ATP-binding positions include Asp-31, 49-50 (DV), and 72-73 (EN). Glu-72 contributes to the L-lysine binding site. The region spanning 85-269 (EEFSCPVLFD…LIELLFRAFG (185 aa)) is the ATP-grasp domain. Residues Lys-104, Lys-131, Ser-138, and 160–163 (EEYV) each bind ADP. Residues 169–171 (SLE) and Asp-225 each bind D-ornithine. Positions 227, 239, and 241 each coordinate Mg(2+). Glu-239 lines the ADP pocket. D-ornithine is bound by residues 243–248 (RFPSQT) and Glu-302. The L-lysine site is built by Ser-246 and Glu-302.

It belongs to the PylC family. Requires Mg(2+) as cofactor.

The catalysed reaction is (3R)-3-methyl-D-ornithine + L-lysine + ATP = (3R)-3-methyl-D-ornithyl-N(6)-L-lysine + ADP + phosphate + H(+). Its pathway is amino-acid biosynthesis; L-pyrrolysine biosynthesis. Is required for the biosynthesis of pyrrolysine. Catalyzes the ATP-dependent ligation between (3R)-3-methyl-D-ornithine and L-lysine, leading to (3R)-3-methyl-D-ornithyl-N6-L-lysine. This chain is 3-methyl-D-ornithine--L-lysine ligase, found in Methanosarcina acetivorans (strain ATCC 35395 / DSM 2834 / JCM 12185 / C2A).